The following is a 90-amino-acid chain: WAP four-disulfide core domain protein 12 (90 aa).

The signal sequence occupies residues 1-23 (MGSSSFLVLMVSLALVTLVAVEG). The 48-residue stretch at 27 to 74 (GIEKAGVCPADNVRCFKSDPPQCHTDQDCLGERKCCYLHCGFKCVIPV) folds into the WAP domain. 4 disulfide bridges follow: C34–C62, C41–C66, C49–C61, and C55–C70.

It is found in the secreted. In terms of biological role, antibacterial protein. Putative acid-stable proteinase inhibitor. This chain is WAP four-disulfide core domain protein 12 (WFDC12), found in Pongo abelii (Sumatran orangutan).